The sequence spans 441 residues: Damage-control phosphatase ARMT1 (441 aa).

A2 is modified (N-acetylalanine). K40 carries the post-translational modification N6-acetyllysine. The residue at position 102 (S102) is a Phosphoserine. Residues D253 and N254 each contribute to the Mn(2+) site. A substrate-binding site is contributed by 253–254 (DN). S-adenosyl-L-methionine-binding residues include E258 and D291. A Mn(2+)-binding site is contributed by D291. Substrate contacts are provided by residues 367–371 (DLNYR) and K404. The Subfamily III RTxK motif motif lies at 401–404 (RTLK).

The protein belongs to the damage-control phosphatase family. Sugar phosphate phosphatase III subfamily. Mn(2+) serves as cofactor. Requires Ni(2+) as cofactor. Automethylated.

It carries out the reaction beta-D-fructose 1-phosphate + H2O = D-fructose + phosphate. It catalyses the reaction beta-D-fructose 6-phosphate = dihydroxyacetone + D-glyceraldehyde 3-phosphate. The enzyme catalyses L-glutamyl-[protein] + S-adenosyl-L-methionine = [protein]-L-glutamate 5-O-methyl ester + S-adenosyl-L-homocysteine. Functionally, metal-dependent phosphatase that shows phosphatase activity against several substrates, including fructose-1-phosphate and fructose-6-phosphate. Its preference for fructose-1-phosphate, a strong glycating agent that causes DNA damage rather than a canonical yeast metabolite, suggests a damage-control function in hexose phosphate metabolism. Has also been shown to have O-methyltransferase activity that methylates glutamate residues of target proteins to form gamma-glutamyl methyl ester residues. Possibly methylates PCNA, suggesting it is involved in the DNA damage response. The protein is Damage-control phosphatase ARMT1 of Homo sapiens (Human).